We begin with the raw amino-acid sequence, 219 residues long: Small ribosomal subunit protein uS3c (219 aa).

Residues 39–111 (IRKFLMEKIK…NSFFNVKINF (73 aa)) enclose the KH type-2 domain.

The protein belongs to the universal ribosomal protein uS3 family. In terms of assembly, part of the 30S ribosomal subunit.

Its subcellular location is the plastid. This chain is Small ribosomal subunit protein uS3c (rps3), found in Euglena longa (Euglenophycean alga).